The sequence spans 354 residues: NADH-quinone oxidoreductase subunit H (354 aa).

Helical transmembrane passes span 23-43, 91-111, 124-144, 162-182, 203-223, 250-270, 291-311, and 330-350; these read LVRAVCIILPLLLCVAYLILW, YIIAPLMVLMPAVAIWAVIPF, LLYVMAISSVGVYGVILAGWA, ISYEIAMGFALVTVLMVTGSL, ILSWNWLPLLPMFGVYFISGV, GMAFALFFLAEYINMIVISAL, IPGFFWLLIKVFLLLSVFIWL, and IFIPLTVGWLVVVAIWLVSPW.

Belongs to the complex I subunit 1 family. NDH-1 is composed of 14 different subunits. Subunits NuoA, H, J, K, L, M, N constitute the membrane sector of the complex.

The protein resides in the cell inner membrane. The enzyme catalyses a quinone + NADH + 5 H(+)(in) = a quinol + NAD(+) + 4 H(+)(out). Functionally, NDH-1 shuttles electrons from NADH, via FMN and iron-sulfur (Fe-S) centers, to quinones in the respiratory chain. The immediate electron acceptor for the enzyme in this species is believed to be ubiquinone. Couples the redox reaction to proton translocation (for every two electrons transferred, four hydrogen ions are translocated across the cytoplasmic membrane), and thus conserves the redox energy in a proton gradient. This subunit may bind ubiquinone. The protein is NADH-quinone oxidoreductase subunit H of Ralstonia pickettii (strain 12J).